A 198-amino-acid chain; its full sequence is Alpha1-proteinase inhibitor-degradation deficient protein 37 (198 aa).

Serine 79 is modified (phosphoserine).

Its subcellular location is the cytoplasm. Its function is as follows. Involved in ER-associated protein degradation (ERAD). The chain is Alpha1-proteinase inhibitor-degradation deficient protein 37 (ADD37) from Saccharomyces cerevisiae (strain ATCC 204508 / S288c) (Baker's yeast).